Reading from the N-terminus, the 483-residue chain is Islet cell autoantigen 1 (483 aa).

Residues 51-254 (ASDADLDAKL…TSHTMAAIHE (204 aa)) form the AH domain. Positions 281-321 (EEKKKINQQESTDAAVQEPSQLISLEEENQRKESSSFKTED) are disordered. Over residues 288–303 (QQESTDAAVQEPSQLI) the composition is skewed to polar residues. Over residues 308–321 (ENQRKESSSFKTED) the composition is skewed to basic and acidic residues.

As to expression, expressed abundantly in pancreas, heart and brain with low levels of expression in lung, kidney, liver and thyroid.

The protein resides in the cytoplasm. The protein localises to the cytosol. It is found in the golgi apparatus membrane. Its subcellular location is the cytoplasmic vesicle. It localises to the secretory vesicle membrane. The protein resides in the secretory vesicle. The protein localises to the synaptic vesicle membrane. Its function is as follows. May play a role in neurotransmitter secretion. This is Islet cell autoantigen 1 (ICA1) from Homo sapiens (Human).